A 183-amino-acid polypeptide reads, in one-letter code: Dual-action ribosomal maturation protein DarP (183 aa).

Belongs to the DarP family.

It is found in the cytoplasm. Functionally, member of a network of 50S ribosomal subunit biogenesis factors which assembles along the 30S-50S interface, preventing incorrect 23S rRNA structures from forming. Promotes peptidyl transferase center (PTC) maturation. The polypeptide is Dual-action ribosomal maturation protein DarP (Salmonella paratyphi A (strain ATCC 9150 / SARB42)).